An 838-amino-acid polypeptide reads, in one-letter code: Probable beta-glucosidase I (838 aa).

N-linked (GlcNAc...) asparagine glycosylation is present at Asn-197. Asp-225 is a catalytic residue. The PA14 domain occupies 395-555; it reads DGKKGFKFRV…SQEELISKAA (161 aa). An N-linked (GlcNAc...) asparagine glycan is attached at Asn-493.

The protein belongs to the glycosyl hydrolase 3 family.

Its subcellular location is the secreted. It catalyses the reaction Hydrolysis of terminal, non-reducing beta-D-glucosyl residues with release of beta-D-glucose.. It participates in glycan metabolism; cellulose degradation. Beta-glucosidases are one of a number of cellulolytic enzymes involved in the degradation of cellulosic biomass. Catalyzes the last step releasing glucose from the inhibitory cellobiose. The polypeptide is Probable beta-glucosidase I (bglI) (Aspergillus fumigatus (strain ATCC MYA-4609 / CBS 101355 / FGSC A1100 / Af293) (Neosartorya fumigata)).